A 287-amino-acid chain; its full sequence is Thymidylate synthase (287 aa).

Residue R21 coordinates dUMP. A (6R)-5,10-methylene-5,6,7,8-tetrahydrofolate-binding site is contributed by H51. 150-151 (RR) contacts dUMP. Catalysis depends on C170, which acts as the Nucleophile. Residues 190 to 193 (RSGD), N201, and 231 to 233 (HIY) contribute to the dUMP site. Residue D193 coordinates (6R)-5,10-methylene-5,6,7,8-tetrahydrofolate. A286 is a binding site for (6R)-5,10-methylene-5,6,7,8-tetrahydrofolate.

Belongs to the thymidylate synthase family. Bacterial-type ThyA subfamily. As to quaternary structure, homodimer.

It is found in the cytoplasm. It catalyses the reaction dUMP + (6R)-5,10-methylene-5,6,7,8-tetrahydrofolate = 7,8-dihydrofolate + dTMP. It participates in pyrimidine metabolism; dTTP biosynthesis. In terms of biological role, catalyzes the reductive methylation of 2'-deoxyuridine-5'-monophosphate (dUMP) to 2'-deoxythymidine-5'-monophosphate (dTMP) while utilizing 5,10-methylenetetrahydrofolate (mTHF) as the methyl donor and reductant in the reaction, yielding dihydrofolate (DHF) as a by-product. This enzymatic reaction provides an intracellular de novo source of dTMP, an essential precursor for DNA biosynthesis. The polypeptide is Thymidylate synthase (Mycoplasma pneumoniae (strain ATCC 29342 / M129 / Subtype 1) (Mycoplasmoides pneumoniae)).